Reading from the N-terminus, the 241-residue chain is tRNA (guanine-N(7)-)-methyltransferase (241 aa).

Residues E71, E96, D123, and D146 each contribute to the S-adenosyl-L-methionine site. The active site involves D146. Substrate is bound by residues K150, D182, and 219–222 (TKFE).

The protein belongs to the class I-like SAM-binding methyltransferase superfamily. TrmB family.

It catalyses the reaction guanosine(46) in tRNA + S-adenosyl-L-methionine = N(7)-methylguanosine(46) in tRNA + S-adenosyl-L-homocysteine. Its pathway is tRNA modification; N(7)-methylguanine-tRNA biosynthesis. Functionally, catalyzes the formation of N(7)-methylguanine at position 46 (m7G46) in tRNA. The polypeptide is tRNA (guanine-N(7)-)-methyltransferase (Pseudoalteromonas translucida (strain TAC 125)).